The chain runs to 449 residues: 8-oxoguanine deaminase (449 aa).

2 residues coordinate Zn(2+): His64 and His66. Gln69 is a substrate binding site. Zn(2+) is bound at residue His232. Substrate is bound by residues Glu235 and His269. Positions 269 and 320 each coordinate Zn(2+).

It belongs to the metallo-dependent hydrolases superfamily. ATZ/TRZ family. In terms of assembly, homodimer. The cofactor is Zn(2+).

It carries out the reaction 8-oxoguanine + H2O + H(+) = urate + NH4(+). It participates in purine metabolism. Functionally, specifically deaminates 8-Oxoguanine (8-oxoG) to uric acid. 8-oxoG is formed via the oxidation of guanine within DNA by reactive oxygen species and leads, if uncorrected, to the incorporation of 8-oxoG:A mismatches and eventually to G:C to T:A transversions. This Pseudomonas aeruginosa (strain ATCC 15692 / DSM 22644 / CIP 104116 / JCM 14847 / LMG 12228 / 1C / PRS 101 / PAO1) protein is 8-oxoguanine deaminase.